The chain runs to 729 residues: Fatty acid oxidation complex subunit alpha (729 aa).

An enoyl-CoA hydratase/isomerase region spans residues 1–189 (MLYKGDTLYL…KIGLVDGVVA (189 aa)). D296 lines the substrate pocket. Positions 311 to 729 (ETPKHAAVLG…ARPVGALKTA (419 aa)) are 3-hydroxyacyl-CoA dehydrogenase. NAD(+) is bound by residues M324, D343, 400-402 (VVE), K407, and S429. The active-site For 3-hydroxyacyl-CoA dehydrogenase activity is the H450. N453 is a binding site for NAD(+). Substrate-binding residues include N500 and Y660.

In the N-terminal section; belongs to the enoyl-CoA hydratase/isomerase family. The protein in the C-terminal section; belongs to the 3-hydroxyacyl-CoA dehydrogenase family. As to quaternary structure, heterotetramer of two alpha chains (FadB) and two beta chains (FadA).

It carries out the reaction a (3S)-3-hydroxyacyl-CoA + NAD(+) = a 3-oxoacyl-CoA + NADH + H(+). The enzyme catalyses a (3S)-3-hydroxyacyl-CoA = a (2E)-enoyl-CoA + H2O. It catalyses the reaction a 4-saturated-(3S)-3-hydroxyacyl-CoA = a (3E)-enoyl-CoA + H2O. The catalysed reaction is (3S)-3-hydroxybutanoyl-CoA = (3R)-3-hydroxybutanoyl-CoA. It carries out the reaction a (3Z)-enoyl-CoA = a 4-saturated (2E)-enoyl-CoA. The enzyme catalyses a (3E)-enoyl-CoA = a 4-saturated (2E)-enoyl-CoA. It functions in the pathway lipid metabolism; fatty acid beta-oxidation. Its function is as follows. Involved in the aerobic and anaerobic degradation of long-chain fatty acids via beta-oxidation cycle. Catalyzes the formation of 3-oxoacyl-CoA from enoyl-CoA via L-3-hydroxyacyl-CoA. It can also use D-3-hydroxyacyl-CoA and cis-3-enoyl-CoA as substrate. The chain is Fatty acid oxidation complex subunit alpha from Klebsiella pneumoniae (strain 342).